The primary structure comprises 722 residues: Solute carrier organic anion transporter family member 4A1 (722 aa).

Positions 1 to 52 are disordered; the sequence is MPLHQLGDKPLTFPSPNSAMENGLDHTPPSRRASPGTPLSPGSLRSAAHSPL. At 1-103 the chain is on the cytoplasmic side; that stretch reads MPLHQLGDKP…PCLQVLNTPK (103 aa). Position 34 is a phosphoserine (Ser34). Thr37 is modified (phosphothreonine). Phosphoserine occurs at positions 40, 43, 46, and 50. The helical transmembrane segment at 104 to 124 threads the bilayer; sequence GILFFLCAAAFLQGMTVNGFI. At 125 to 143 the chain is on the extracellular side; that stretch reads NTVITSLERRYDLHSYQSG. A helical membrane pass occupies residues 144–164; that stretch reads LIASSYDIAACLCLTFVSYFG. The Cytoplasmic segment spans residues 165–170; that stretch reads GSGHKP. The helical transmembrane segment at 171 to 195 threads the bilayer; that stretch reads RWLGWGVLLMGTGSLVFALPHFTAG. The Extracellular portion of the chain corresponds to 196–222; sequence RYEVELDAGVRTCPANPGAVCADSTSG. Residues 223 to 253 traverse the membrane as a helical segment; the sequence is LSRYQLVFMLGQFLHGVGATPLYTLGVTYLD. Over 254–272 the chain is Cytoplasmic; that stretch reads ENVKSSCSPVYIAIFYTAA. Residues 273–293 form a helical membrane-spanning segment; it reads ILGPAAGYLIGGALLNIYTEM. Over 294 to 307 the chain is Extracellular; that stretch reads GRRTELTTESPLWV. Residues 308–332 traverse the membrane as a helical segment; it reads GAWWVGFLGSGAAAFFTAVPILGYP. At 333-378 the chain is on the cytoplasmic side; sequence RQLPGSQRYAVMRAAEMHQLKDSSRGEASNPDFGKTIRDLPLSIWL. The helical transmembrane segment at 379–400 threads the bilayer; the sequence is LLKNPTFILLCLAGATEATLIT. Over 401–420 the chain is Extracellular; that stretch reads GMSTFSPKFLESQFSLSASE. A helical transmembrane segment spans residues 421–444; sequence AATLFGYLVVPAGGGGTFLGGFFV. Topologically, residues 445-448 are cytoplasmic; it reads NKLR. The helical transmembrane segment at 449-471 threads the bilayer; it reads LRGSAVIKFCLFCTVVSLLGILV. The Extracellular segment spans residues 472–580; it reads FSLHCPSVPM…TSTCQRKPLL (109 aa). The 58-residue stretch at 498 to 555 folds into the Kazal-like domain; the sequence is LNLTAPCNAACSCQPEHYSPVCGSDGLMYFSLCHAGCPAATETNVDGQKVYRDCSCIP. An N-linked (GlcNAc...) asparagine glycan is attached at Asn499. 3 disulfide bridges follow: Cys504–Cys534, Cys510–Cys530, and Cys519–Cys553. Asn557 is a glycosylation site (N-linked (GlcNAc...) asparagine). A helical transmembrane segment spans residues 581–603; the sequence is LVFIFVVIFFTFLSSIPALTATL. Over 604–612 the chain is Cytoplasmic; it reads RCVRDPQRS. The chain crosses the membrane as a helical span at residues 613–638; it reads FALGIQWIVVRILGGIPGPIAFGWVI. The Extracellular portion of the chain corresponds to 639–671; sequence DKACLLWQDQCGQQGSCLVYQNSAMSRYILIMG. Residues 672–689 traverse the membrane as a helical segment; it reads LLYKVLGVLFFAIACFLY. Residues 690 to 722 lie on the Cytoplasmic side of the membrane; the sequence is KPLSESSDGLETCLPSQSSAPDSATDSQLQSSV. A disordered region spans residues 703-722; it reads LPSQSSAPDSATDSQLQSSV.

It belongs to the organo anion transporter (TC 2.A.60) family. Widely expressed. Expressed in placental trophoblasts. Expressed in pancreas, kidney, skeletal muscle, liver, lung, brain, heart, colon, small intestine, ovary, testis, prostate, thymus and spleen. In testis, primarily localized to Leydig cells.

The protein localises to the cell membrane. The enzyme catalyses 3,3',5-triiodo-L-thyronine(out) + L-glutamate(in) = 3,3',5-triiodo-L-thyronine(in) + L-glutamate(out). It carries out the reaction L-thyroxine(out) + L-glutamate(in) = L-thyroxine(in) + L-glutamate(out). The catalysed reaction is estrone 3-sulfate(out) + L-glutamate(in) = estrone 3-sulfate(in) + L-glutamate(out). It catalyses the reaction taurocholate(out) + L-glutamate(in) = taurocholate(in) + L-glutamate(out). The enzyme catalyses 3,3',5-triiodo-L-thyronine(out) = 3,3',5-triiodo-L-thyronine(in). It carries out the reaction L-thyroxine(out) = L-thyroxine(in). The catalysed reaction is 3,3',5'-triiodo-L-thyronine(out) = 3,3',5'-triiodo-L-thyronine(in). It catalyses the reaction estrone 3-sulfate(out) = estrone 3-sulfate(in). The enzyme catalyses 17beta-estradiol 17-O-(beta-D-glucuronate)(out) = 17beta-estradiol 17-O-(beta-D-glucuronate)(in). It carries out the reaction taurocholate(out) = taurocholate(in). The catalysed reaction is prostaglandin E2(out) = prostaglandin E2(in). In terms of biological role, organic anion antiporter with apparent broad substrate specificity. Recognizes various substrates including thyroid hormones 3,3',5-triiodo-L-thyronine (T3), L-thyroxine (T4) and 3,3',5'-triiodo-L-thyronine (rT3), conjugated steroids such as estrone 3-sulfate and estradiol 17-beta glucuronide, bile acids such as taurocholate and prostanoids such as prostaglandin E2, likely operating in a tissue-specific manner. May be involved in uptake of metabolites from the circulation into organs such as kidney, liver or placenta. Possibly drives the selective transport of thyroid hormones and estrogens coupled to an outward glutamate gradient across the microvillous membrane of the placenta. The transport mechanism, its electrogenicity and potential tissue-specific counterions remain to be elucidated. The sequence is that of Solute carrier organic anion transporter family member 4A1 (SLCO4A1) from Homo sapiens (Human).